A 66-amino-acid polypeptide reads, in one-letter code: Alpha-conotoxin Vc1a (66 aa).

The N-terminal stretch at 1 to 25 (MGMRMMFTVFLLVVLATTVVSSTSG) is a signal peptide. Positions 26–47 (RREFRGRNAAAKASDLVSLTDK) are excised as a propeptide. 2 disulfides stabilise this stretch: Cys51-Cys57 and Cys52-Cys65. The tract at residues 53-55 (SDP) is ser-Xaa-Pro motif, crucial for potent interaction with nAChR. Key region for inhibition of alpha-9-alpha-10/CHRNA9-CHRNA10 nAChR regions lie at residues 54-56 (DPR) and 60-64 (DHPEI). Pro55 is subject to 4-hydroxyproline. At Glu63 the chain carries 4-carboxyglutamate. Residue Cys65 is modified to Cysteine amide.

This sequence belongs to the conotoxin A superfamily. In terms of processing, vc1.1 is described as having no post-translational modifications (except C-terminal amidation), whereas Vc1a contains a hydroxyproline at Pro-55 and a 4-carboxyglutamate at Glu-63 (and a C-terminal amidation). Post-translationally, hydroxylation of Pro-55 is not important for inhibition of alpha-9-alpha-10/CHRNA9-CHRNA10 nAChRs, since [P6O]Vc1.1 (Pro-55 hydroxylated) shows similar inhibition than native toxin (IC(50)=99.1 nM). In contrast, hydroxylation of Pro-55 seems to impair inhibition of HVA calcium channel currents, since [P6O]Vc1.1 has no effect on HVA calcium channel currents. In vivo, hydroxylation of Pro-55 seems to induce the loss of analgesic effects in rat models of neuropathic pain, since [P6O]Vc1.1 has no effect on mechanical allodynia. Gamma-carboxylation of Glu-63 is not important for inhibition of alpha-9-alpha-10/CHRNA9-CHRNA10 nAChRs, since [E14gamma]Vc1.1 (carboxyglutamate at Glu-63) shows similar inhibition than native toxin (IC(50)=65.3 nM). In contrast, gamma-carboxylation of Glu-63 seems to impair inhibition of HVA calcium channel currents, since [E14gamma]Vc1.1 has no effect on HVA calcium channel currents. In terms of processing, non-native isomers 'ribbon' (with disulfide connectivity C1-C4; C2-C3) and 'beads' (with disulfide connectivity C1-C2; C3-C4) of Vc1.1 also inhibit HVA calcium channel currents in rat DRG neurons (20-30% inhibition at 1 uM toxin). It has been shown that both reduced and alkylated Vc1.1 have no effect on HVA calcium channel currents. The observed activity can be attributed to specific isomers. Post-translationally, [C3S]Vc1.1(1-8) mutant is C-terminally amidated. In terms of tissue distribution, expressed by the venom duct.

It localises to the secreted. Functionally, alpha-conotoxins act on postsynaptic membranes, they bind to the nicotinic acetylcholine receptors (nAChR) and thus inhibit them. This toxin (native toxin Vc1a; hydroxylated and gamma-carboxylated) blocks alpha-9-alpha-10/CHRNA9-CHRNA10 nAChRs (IC(50)=62.9 nM). In contrast to the non-post-translationally modified analog Vc1.1, Vc1a does not inhibit high voltage-activated (HVA) calcium channel currents. In vivo, in contrast to Vc1.1, Vc1a does not show analgesic effects in rat models of neuropathic pain. In terms of biological role, the synthetic peptide Vc1.1 (a non-hydroxylated and non-gamma-carboxylated analog of Vc1a) has two types of targets. It blocks alpha-9-alpha-10/CHRNA9-CHRNA10 nAChRs (on rat receptors, IC(50)=19-109 nM) (with preference for rat over human receptors) and inhibits high voltage-activated (HVA) calcium channel (Cav2.2, Cav2.3) currents by acting on GABA(B) receptors (GABBR1 and GABBR2) (IC(50)=1.7 nM). It also shows moderate inhibition on alpha-6/alpha-3-beta-2-beta-3 (CHRNA6/CHRNA3-CHRNB2-CHRNB3) (IC(50)=140 nM) and alpha-6/alpha-3-beta-4 (CHRNA6/CHRNA3-CHRNB4) (IC(50)=980 nM). On alpha-9-alpha-10/CHRNA9-CHRNA10 nAChR, it most likely interacts with the alpha-10(+)/alpha-9(-)interface of the receptor. In vivo, it acts as a powerful analgesic in rat models of neuropathic pain. This Conus victoriae (Queen Victoria cone) protein is Alpha-conotoxin Vc1a.